Reading from the N-terminus, the 409-residue chain is Serine/threonine transporter SstT (409 aa).

Transmembrane regions (helical) follow at residues 24–44, 48–68, 82–102, 142–162, 194–214, 218–238, 292–312, 319–339, and 365–385; these read LALG…AGLF, FVGA…AATI, IIVL…IAGM, AIAN…GAAL, LGIF…ALAG, LLAV…PAIV, IPLG…VLAM, GIQV…VSAC, and VAMQ…SAET.

The protein belongs to the dicarboxylate/amino acid:cation symporter (DAACS) (TC 2.A.23) family.

It is found in the cell inner membrane. It catalyses the reaction L-serine(in) + Na(+)(in) = L-serine(out) + Na(+)(out). The catalysed reaction is L-threonine(in) + Na(+)(in) = L-threonine(out) + Na(+)(out). Involved in the import of serine and threonine into the cell, with the concomitant import of sodium (symport system). The chain is Serine/threonine transporter SstT from Neisseria gonorrhoeae (strain NCCP11945).